The following is a 470-amino-acid chain: Pancreatic lipase-related protein 2 (470 aa).

Residues 1–18 (MMLFVWTTGLLLLATARG) form the signal peptide. Residues Cys-22 and Cys-28 are joined by a disulfide bond. Positions 94 to 106 (IHGFIDNGEKDWL) are required for galactolipase activity. Residues Cys-110 and Cys-121 are joined by a disulfide bond. The active-site Nucleophile is Ser-172. The Charge relay system role is filled by Asp-196. Glu-207, Arg-210, Asp-212, and Asp-215 together coordinate Ca(2+). Cysteines 257 and 281 form a disulfide. A required for galactolipase activity region spans residues 258-280 (EKNIISTIVDVNGFLEGITSLAA). The active-site Charge relay system is His-283. 2 disulfides stabilise this stretch: Cys-305–Cys-316 and Cys-319–Cys-324. 2 N-linked (GlcNAc...) asparagine glycosylation sites follow: Asn-354 and Asn-429. Residues 358 to 470 (WRYKVSVTLS…EDVLQSLSPC (113 aa)) form the PLAT domain. Cys-454 and Cys-470 are joined by a disulfide.

The protein belongs to the AB hydrolase superfamily. Lipase family. Pancreas.

It localises to the secreted. The protein resides in the zymogen granule membrane. It is found in the cell projection. Its subcellular location is the neuron projection. The catalysed reaction is a triacylglycerol + H2O = a diacylglycerol + a fatty acid + H(+). It catalyses the reaction a 1,2-diacyl-3-O-(beta-D-galactosyl)-sn-glycerol + 2 H2O = 3-beta-D-galactosyl-sn-glycerol + 2 a fatty acid + 2 H(+). The enzyme catalyses 1,2,3-tri-(9Z-octadecenoyl)-glycerol + H2O = di-(9Z)-octadecenoylglycerol + (9Z)-octadecenoate + H(+). It carries out the reaction di-(9Z)-octadecenoylglycerol + H2O = (9Z-octadecenoyl)-glycerol + (9Z)-octadecenoate + H(+). The catalysed reaction is (9Z-octadecenoyl)-glycerol + H2O = glycerol + (9Z)-octadecenoate + H(+). It catalyses the reaction 1-(9Z-octadecenoyl)-glycerol + H2O = glycerol + (9Z)-octadecenoate + H(+). The enzyme catalyses 1,2,3-tripropanoylglycerol + H2O = dipropanoylglycerol + propanoate + H(+). It carries out the reaction 1,2,3-tributanoylglycerol + H2O = dibutanoylglycerol + butanoate + H(+). The catalysed reaction is 1,2,3-trioctanoylglycerol + H2O = dioctanoylglycerol + octanoate + H(+). It catalyses the reaction 1,2-didecanoylglycerol + H2O = decanoylglycerol + decanoate + H(+). The enzyme catalyses long chain 1,2-diacyl-3-O-beta-D-galactosyl-sn-glycerol + H2O = long chain acyl-3-O-beta-D-galactosyl-sn-glycerol + a fatty acid + H(+). It carries out the reaction 1,2-dioctanoyl-3-O-beta-D-galactosyl-sn-glycerol + H2O = octanoyl-3-(beta-D-galactosyl)-sn-glycerol + octanoate + H(+). The catalysed reaction is 1,2-didodecanoyl-3-beta-D-galactosyl-sn-glycerol + H2O = dodecanoyl-3-beta-D-galactosyl-sn-glycerol + dodecanoate + H(+). It catalyses the reaction 1-beta-D-galactosyl-2,3-didodecanoyl-sn-glycerol + H2O = 1-beta-D-galactosyl-dodecanoyl-sn-glycerol + dodecanoate + H(+). The enzyme catalyses a 1,2-diacyl-3-O-[alpha-D-galactosyl-(1-&gt;6)-beta-D-galactosyl]-sn-glycerol + H2O = acyl-3-O-[alpha-D-galactosyl-(1-&gt;6)-beta-D-galactosyl]-sn-glycerol + a fatty acid + H(+). It carries out the reaction long chain 1,2-diacyl-3-O-[alpha-D-galactosyl-(1-&gt;6)-beta-D-galactosyl]-sn-glycerol + H2O = long chain acyl-3-O-[alpha-D-galactosyl-(1-&gt;6)-beta-D-galactosyl]-sn-glycerol + a fatty acid + H(+). The catalysed reaction is 1,2-dioctanoyl-3-O-[alpha-D-galactosyl-(1-&gt;6)-beta-D-galactosyl]-sn-glycerol + H2O = octanoyl-3-O-[alpha-D-galactosyl-(1-&gt;6)-beta-D-galactosyl]-sn-glycerol + octanoate + H(+). It catalyses the reaction 1,2-didodecanoyl-3-O-[alpha-D-galactosyl-(1-&gt;6)-beta-D-galactosyl]-sn-glycerol + H2O = dodecanoyl-3-O-[alpha-D-galactosyl-(1-&gt;6)-beta-D-galactosyl]-sn-glycerol + dodecanoate + H(+). The enzyme catalyses a 1,2-diacyl-sn-glycero-3-phosphocholine + H2O = a monoacyl-sn-glycero-3-phosphocholine + a fatty acid + H(+). It functions in the pathway glycerolipid metabolism; triacylglycerol degradation. Its pathway is glycolipid metabolism. With respect to regulation, triacylglycerol lipase activity is inhibited by increasing bile salts concentrations and not reactivated by CLPS. In terms of biological role, lipase that primarily hydrolyzes triglycerides and galactosylglycerides. In neonates, may play a major role in pancreatic digestion of dietary fats such as milk fat globules enriched in long-chain triglycerides. Hydrolyzes short-, medium- and long-chain fatty acyls in triglycerides without apparent positional specificity. Can completely deacylate triacylglycerols. When the liver matures and bile salt synthesis increases, likely functions mainly as a galactolipase and monoacylglycerol lipase. Hydrolyzes monogalactosyldiglycerols (MGDG) and digalactosyldiacylglycerols (DGDG) present in a plant-based diet, releasing long-chain polyunsaturated fatty acids. Hydrolyzes medium- and long-chain fatty acyls in galactolipids. May act together with LIPF to hydrolyze partially digested triglycerides. Hydrolyzes long-chain monoglycerides with high efficiency. In cytotoxic T cells, contributes to perforin-dependent cell lysis, but is unlikely to mediate direct cytotoxicity. Also has low phospholipase activity. In neurons, required for the localization of the phospholipid 1-oleoyl-2-palmitoyl-PC (OPPC) to neurite tips through acyl chain remodeling of membrane phospholipids. The resulting OPPC-rich lipid membrane domain recruits the t-SNARE protein STX4 by selectively interacting with the STX4 transmembrane domain and this promotes surface expression of the dopamine transporter SLC6A3/DAT at neurite tips by facilitating fusion of SLC6A3-containing transport vesicles with the plasma membrane. The chain is Pancreatic lipase-related protein 2 from Myocastor coypus (Coypu).